The sequence spans 308 residues: Putative transposon Ty5-1 protein YCL074W (308 aa).

In Saccharomyces cerevisiae (strain ATCC 204508 / S288c) (Baker's yeast), this protein is Putative transposon Ty5-1 protein YCL074W (TY5A).